Consider the following 329-residue polypeptide: Uroporphyrinogen decarboxylase (329 aa).

Substrate contacts are provided by residues 22–26 (RQVGR), Asp-71, Tyr-140, Ser-195, and His-307.

Belongs to the uroporphyrinogen decarboxylase family. Homodimer.

It localises to the cytoplasm. The catalysed reaction is uroporphyrinogen III + 4 H(+) = coproporphyrinogen III + 4 CO2. It participates in porphyrin-containing compound metabolism; protoporphyrin-IX biosynthesis; coproporphyrinogen-III from 5-aminolevulinate: step 4/4. In terms of biological role, catalyzes the decarboxylation of four acetate groups of uroporphyrinogen-III to yield coproporphyrinogen-III. This Chlamydia pneumoniae (Chlamydophila pneumoniae) protein is Uroporphyrinogen decarboxylase.